A 466-amino-acid polypeptide reads, in one-letter code: Cysteine--tRNA ligase 1 (466 aa).

Residue C27 participates in Zn(2+) binding. A 'HIGH' region motif is present at residues 29 to 39 (PTVQSPPHIGH). Zn(2+) is bound by residues C211, H236, and E240. A 'KMSKS' region motif is present at residues 267–271 (KMSKS). K270 contributes to the ATP binding site.

The protein belongs to the class-I aminoacyl-tRNA synthetase family. Monomer. Requires Zn(2+) as cofactor.

The protein localises to the cytoplasm. It carries out the reaction tRNA(Cys) + L-cysteine + ATP = L-cysteinyl-tRNA(Cys) + AMP + diphosphate. The polypeptide is Cysteine--tRNA ligase 1 (Tropheryma whipplei (strain TW08/27) (Whipple's bacillus)).